A 1708-amino-acid polypeptide reads, in one-letter code: Rapamycin-insensitive companion of mTOR (1708 aa).

The interaction with NBN stretch occupies residues Met-1–Gln-789. Ser-21, Ser-35, and Ser-265 each carry phosphoserine. A Glycyl lysine isopeptide (Lys-Gly) (interchain with G-Cter in ubiquitin) cross-link involves residue Lys-274. The segment at Leu-521–Leu-570 is ribosome-binding domain. 3 residues coordinate ATP: Asn-543, Arg-572, and Arg-576. The tract at residues Leu-1022–Pro-1041 is disordered. N6-acetyllysine occurs at positions 1092 and 1095. Residue Thr-1103 is modified to Phosphothreonine. Residues Thr-1103 to Leu-1134 form a disordered region. Lys-1116, Lys-1119, and Lys-1125 each carry N6-acetyllysine. At Thr-1135 the chain carries Phosphothreonine; by RPS6KB1. 3 positions are modified to phosphoserine: Ser-1138, Ser-1162, and Ser-1219. A disordered region spans residues Val-1204–Cys-1252. Positions Glu-1206–Asn-1221 are enriched in polar residues. Positions Thr-1222–Thr-1240 are enriched in low complexity. The residue at position 1235 (Ser-1235) is a Phosphoserine; by GSK3-beta. A Phosphothreonine modification is found at Thr-1271. Ser-1274, Ser-1278, Ser-1282, and Ser-1284 each carry phosphoserine. A compositionally biased stretch (low complexity) spans Asn-1275–Val-1288. Residues Asn-1275–Arg-1298 form a disordered region. Thr-1295 bears the Phosphothreonine mark. A phosphoserine mark is found at Ser-1302 and Ser-1313. Position 1332 is a phosphothreonine (Thr-1332). Phosphoserine is present on residues Ser-1346 and Ser-1353. At Thr-1376 the chain carries Phosphothreonine. Ser-1385 is subject to Phosphoserine. Phosphotyrosine is present on Tyr-1386. Ser-1388, Ser-1396, and Ser-1411 each carry phosphoserine. 3 residues coordinate Zn(2+): His-1515, Cys-1520, and Cys-1523. Phosphoserine occurs at positions 1571, 1574, 1577, and 1591. Cys-1651 serves as a coordination point for Zn(2+). Residue Thr-1695 is modified to Phosphothreonine; by GSK3-alpha and GSK3-beta.

This sequence belongs to the RICTOR family. In terms of assembly, component of the mechanistic target of rapamycin complex 2 (mTORC2), consisting in two heterotretramers composed of MTOR, MLST8, RICTOR and MAPKAP1/SIN1. The mTORC2 core complex associates with PRR5/PROTOR1 and/or PRR5L/PROTOR2. Contrary to mTORC1, mTORC2 does not bind to and is not sensitive to FKBP12-rapamycin. Binds directly to MTOR and PRR5 within the TORC2 complex; interaction with MTOR is enhanced by deubiquitination of RICTOR by USP9X. Interaction with MAPKAP1 is not enhanced by RICTOR deubiquitination by USP9X. Interacts with CCDC28B. Interacts with NBN. Interacts with SIK3. Interacts with NCKAP1L. Interacts with kinases GSK3A and GSK3B; the interactions lead to phosphorylation of RICTOR at Thr-1695 which facilitates its FBXW7-mediated ubiquitination and subsequent degradation. Interacts with FBXW7; the interaction is enhanced by GSK3-mediated phosphorylation of Thr-1695 and results in RICTOR ubiquitination and degradation. Interacts with ARMH4 (via cytoplasmic tail); this interaction bridges ARMH4 to the mTORC2 complex and inhibits the mTORC2 kinase activity. Interacts with UBXN2A. Interacts with TSPAN8. As to quaternary structure, (Microbial infection) Interacts with vaccinia virus protein F17; this interaction dysregulates MTOR. Post-translationally, phosphorylated by MTOR; when part of mTORC2. Phosphorylated at Thr-1135 by RPS6KB1 downstream of the mTORC1 complex: phosphorylation of RICTOR inhibits mTORC2 signaling by creating a binding site for 14-3-3 proteins. Phosphorylated at Thr-1695 by GSK3A and GSK3B which facilitates RICTOR ubiquitination and subsequent degradation. Phosphorylated at Ser-1235 by GSK3B in response to endoplasmic stress, inhibiting mTORC2 signaling. In terms of processing, ubiquitinated by the SCF(FBXW7) complex, leading to its degradation by the proteasome. Deubiquitinated by USP9X; deubiquitination stabilizes RICTOR and enhances its binding to MTOR, thus promoting mTORC2 complex assembly. Acetylated by EP300/p300 in response to glucose, leading to activate the mTORC2 complex. Acetylation by BLOC1S1/GCN5L1 in response to hypotoxic stress protects RICTOR against ubiquitination and subsequent degradation by the proteasome.

The protein resides in the cell membrane. It is found in the endoplasmic reticulum membrane. The protein localises to the lysosome membrane. Component of the mechanistic target of rapamycin complex 2 (mTORC2), which transduces signals from growth factors to pathways involved in proliferation, cytoskeletal organization, lipogenesis and anabolic output. In response to growth factors, mTORC2 phosphorylates and activates AGC protein kinase family members, including AKT (AKT1, AKT2 and AKT3), PKC (PRKCA, PRKCB and PRKCE) and SGK1. In contrast to mTORC1, mTORC2 is nutrient-insensitive. Within the mTORC2 complex, RICTOR probably acts as a molecular adapter. RICTOR is responsible for the FKBP12-rapamycin-insensitivity of mTORC2. mTORC2 plays a critical role in AKT1 activation by mediating phosphorylation of different sites depending on the context, such as 'Thr-450', 'Ser-473', 'Ser-477' or 'Thr-479', facilitating the phosphorylation of the activation loop of AKT1 on 'Thr-308' by PDPK1/PDK1 which is a prerequisite for full activation. mTORC2 catalyzes the phosphorylation of SGK1 at 'Ser-422' and of PRKCA on 'Ser-657'. The mTORC2 complex also phosphorylates various proteins involved in insulin signaling, such as FBXW8 and IGF2BP1. mTORC2 acts upstream of Rho GTPases to regulate the actin cytoskeleton, probably by activating one or more Rho-type guanine nucleotide exchange factors. mTORC2 promotes the serum-induced formation of stress-fibers or F-actin. The protein is Rapamycin-insensitive companion of mTOR of Homo sapiens (Human).